We begin with the raw amino-acid sequence, 343 residues long: Dihydroorotase (343 aa).

2 residues coordinate Zn(2+): H14 and H16. Residues 16–18 (HLR) and N42 contribute to the substrate site. K99, H136, and H174 together coordinate Zn(2+). K99 bears the N6-carboxylysine mark. Residue H136 coordinates substrate. L219 contributes to the substrate binding site. D247 contacts Zn(2+). D247 is an active-site residue. Residues H251 and A263 each coordinate substrate.

The protein belongs to the metallo-dependent hydrolases superfamily. DHOase family. Class II DHOase subfamily. Homodimer. Requires Zn(2+) as cofactor.

The catalysed reaction is (S)-dihydroorotate + H2O = N-carbamoyl-L-aspartate + H(+). Its pathway is pyrimidine metabolism; UMP biosynthesis via de novo pathway; (S)-dihydroorotate from bicarbonate: step 3/3. Its function is as follows. Catalyzes the reversible cyclization of carbamoyl aspartate to dihydroorotate. The sequence is that of Dihydroorotase from Psychromonas ingrahamii (strain DSM 17664 / CCUG 51855 / 37).